The following is a 509-amino-acid chain: ATP synthase subunit beta, mitochondrial (509 aa).

The transit peptide at 1–32 (MVLPRLIPRLSRSAFKVAQANNRVFNAPFRGM) directs the protein to the mitochondrion. 189-196 (GAGVGKTV) provides a ligand contact to ATP.

F-type ATP synthases have 2 components, the catalytic core F(1) and the membrane-embedded component F(0), linked together by a central stalk and a peripheral stalk. The central stalk, also called rotor shaft, is often seen as part of F(1). The peripheral stalk is seen as part of F(0). F(0) contains the membrane channel next to the rotor. F-type ATP synthases form dimers but each monomer functions independently in ATP generation. The dimer consists of 17 different polypeptides: ATP1 (subunit alpha, 3 molecules per monomer, part of F(1)), ATP2 (subunit beta, 3 copies per monomer, part of F(1)), ATP3 (subunit gamma, part of the central stalk), ATP4 (subunit b, part of the peripheral stalk), ATP5/OSCP (subunit 5/OSCP, part of the peripheral stalk), ATP6 (subunit a, part of the peripheral stalk), ATP7 (subunit d, part of the peripheral stalk), ATP8 (subunit 8, part of the peripheral stalk), OLI1 (subunit c, part of the rotor, 10 molecules per monomer), ATP14 (subunit h, part of the peripheral stalk), ATP15 (subunit epsilon, part of the central stalk), ATP16 (subunit delta, part of the central stalk), ATP17 (subunit f, part of the peripheral stalk), ATP18 (subunit i/j, part of the peripheral stalk), ATP19 (subunit k, dimer-specific, at interface between monomers), ATP20 (subunit g, at interface between monomers), TIM11 (subunit e, at interface between monomers).

It is found in the mitochondrion inner membrane. It carries out the reaction ATP + H2O + 4 H(+)(in) = ADP + phosphate + 5 H(+)(out). Its function is as follows. Mitochondrial membrane ATP synthase (F(1)F(0) ATP synthase or Complex V) produces ATP from ADP in the presence of a proton gradient across the membrane which is generated by electron transport complexes of the respiratory chain. F-type ATP synthases consist of two structural domains, F(1) - containing the extramembraneous catalytic core, and F(0) - containing the membrane proton channel, linked together by a central stalk and a peripheral stalk. During catalysis, ATP synthesis in the catalytic domain of F(1) is coupled via a rotary mechanism of the central stalk subunits to proton translocation. Subunits alpha/ATP1 and beta/ATP2 form the catalytic core in F(1). Rotation of the central stalk against the surrounding alpha/ATP1(3)beta/ATP2(3) subunits leads to hydrolysis of ATP in three separate catalytic sites on the beta/ATP2 subunits. This chain is ATP synthase subunit beta, mitochondrial, found in Yarrowia lipolytica (strain CLIB 122 / E 150) (Yeast).